Consider the following 164-residue polypeptide: MAFRCTLRRLECYRASRLMPYKPSFLFSLISNVNEYERFVPFCQKSKVTEYDPKTGYPTKADLTVGFKGLCETFDSKVVCDPVALTVLADASHHRLFRRLKTHWSIEEASRGRVRVDLEVDFEFASKLHGMMSKFVGSSVASEIIQGFVQQAKIKHKLESENEK.

This sequence belongs to the COQ10 family. Interacts with coenzyme Q.

The protein localises to the mitochondrion inner membrane. Required for the function of coenzyme Q in the respiratory chain. May serve as a chaperone or may be involved in the transport of Q6 from its site of synthesis to the catalytic sites of the respiratory complexes. This is Coenzyme Q-binding protein coq10, mitochondrial from Schizosaccharomyces pombe (strain 972 / ATCC 24843) (Fission yeast).